Consider the following 105-residue polypeptide: MHIKKGDNVKVIAGKDKGKEGKVVSTEPKKDRVVVEGVNIIKKHQKPTQFNPEGGILETEAAIHVSNVQLLDPKTNEPTRVGHKFVDGKKVRIAKKSGEEIKSNN.

The segment at 1-25 is disordered; it reads MHIKKGDNVKVIAGKDKGKEGKVVS.

This sequence belongs to the universal ribosomal protein uL24 family. As to quaternary structure, part of the 50S ribosomal subunit.

Its function is as follows. One of two assembly initiator proteins, it binds directly to the 5'-end of the 23S rRNA, where it nucleates assembly of the 50S subunit. In terms of biological role, one of the proteins that surrounds the polypeptide exit tunnel on the outside of the subunit. This Staphylococcus saprophyticus subsp. saprophyticus (strain ATCC 15305 / DSM 20229 / NCIMB 8711 / NCTC 7292 / S-41) protein is Large ribosomal subunit protein uL24.